Reading from the N-terminus, the 156-residue chain is Transmembrane inner ear expressed protein (156 aa).

A signal peptide spans 1 to 27 (MAGWPGAGPLCVLGGAALGVCLAGVAG). Over 28–57 (QLVEPSTAPPKPKPPPLTKETVVFWDMRLW) the chain is Extracellular. Residues 58–78 (HVVGIFSLFVLSIIITLCCVF) traverse the membrane as a helical segment. Over 79 to 156 (NCRVPRTRKE…NEAKKKKGEK (78 aa)) the chain is Cytoplasmic. The interval 113 to 135 (NELTEVPGEDKKKKKKKKKDSVD) is disordered.

In terms of assembly, forms the MET channel composed of TMC (TMC1 or TMC2), TMIE, TOMT, CIB (CIB2 or CIB3), LHPL5 and PCDH15. As to expression, expressed in many tissues.

The protein resides in the membrane. Auxiliary subunit of the mechanotransducer (MET) non-specific cation channel complex located at the tips of stereocilia of cochlear hair cells and that mediates sensory transduction in the auditory system. The MET complex is composed of two dimeric pore-forming ion-conducting transmembrane TMC (TMC1 or TMC2) subunits, and aided by several auxiliary proteins including LHFPL5, TMIE, CIB2/3 and TOMT, and the tip-link PCDH15. May contribute to the formation of the pore. The chain is Transmembrane inner ear expressed protein (TMIE) from Homo sapiens (Human).